Here is a 39-residue protein sequence, read N- to C-terminus: Photosystem II reaction center protein Psb30 (39 aa).

Residues 12-32 (IFQLTFVGLIMVAGPVVIFLL) form a helical membrane-spanning segment.

It belongs to the Psb30/Ycf12 family. As to quaternary structure, PSII is composed of 1 copy each of membrane proteins PsbA, PsbB, PsbC, PsbD, PsbE, PsbF, PsbH, PsbI, PsbJ, PsbK, PsbL, PsbM, PsbT, PsbX, PsbY, PsbZ, Psb30/Ycf12, peripheral proteins PsbO, CyanoQ (PsbQ), PsbU, PsbV and a large number of cofactors. It forms dimeric complexes.

The protein resides in the cellular thylakoid membrane. Its function is as follows. A core subunit of photosystem II (PSII), probably helps stabilize the reaction center. This is Photosystem II reaction center protein Psb30 from Rippkaea orientalis (strain PCC 8801 / RF-1) (Cyanothece sp. (strain PCC 8801)).